The primary structure comprises 344 residues: Ferrochelatase (344 aa).

Fe cation is bound by residues histidine 190 and glutamate 270.

Belongs to the ferrochelatase family.

It is found in the cytoplasm. The enzyme catalyses heme b + 2 H(+) = protoporphyrin IX + Fe(2+). It functions in the pathway porphyrin-containing compound metabolism; protoheme biosynthesis; protoheme from protoporphyrin-IX: step 1/1. Functionally, catalyzes the ferrous insertion into protoporphyrin IX. The polypeptide is Ferrochelatase (Rickettsia felis (strain ATCC VR-1525 / URRWXCal2) (Rickettsia azadi)).